Here is a 327-residue protein sequence, read N- to C-terminus: Porphobilinogen deaminase (327 aa).

Residue cysteine 251 is modified to S-(dipyrrolylmethanemethyl)cysteine.

This sequence belongs to the HMBS family. The cofactor is dipyrromethane.

It carries out the reaction 4 porphobilinogen + H2O = hydroxymethylbilane + 4 NH4(+). Its pathway is porphyrin-containing compound metabolism; protoporphyrin-IX biosynthesis; coproporphyrinogen-III from 5-aminolevulinate: step 2/4. Its function is as follows. Tetrapolymerization of the monopyrrole PBG into the hydroxymethylbilane pre-uroporphyrinogen in several discrete steps. In Kluyveromyces lactis (strain ATCC 8585 / CBS 2359 / DSM 70799 / NBRC 1267 / NRRL Y-1140 / WM37) (Yeast), this protein is Porphobilinogen deaminase (HEM3).